The chain runs to 206 residues: Peroxynitrite isomerase (206 aa).

Residues 21 to 27 carry the GXWXGXG motif; that stretch reads GTWEGNG. His-190 lines the heme b pocket.

The protein belongs to the nitrobindin family. Homodimer. The cofactor is heme b.

The enzyme catalyses peroxynitrite = nitrate. Its pathway is nitrogen metabolism. Its function is as follows. Heme-binding protein able to scavenge peroxynitrite and to protect free L-tyrosine against peroxynitrite-mediated nitration, by acting as a peroxynitrite isomerase that converts peroxynitrite to nitrate. Therefore, this protein likely plays a role in peroxynitrite sensing and in the detoxification of reactive nitrogen and oxygen species (RNS and ROS, respectively). Is able to bind nitric oxide (NO) in vitro, but may act as a sensor of peroxynitrite levels in vivo. The protein is Peroxynitrite isomerase of Kocuria rhizophila (strain ATCC 9341 / DSM 348 / NBRC 103217 / DC2201).